A 512-amino-acid chain; its full sequence is ATP synthase subunit alpha 1 (512 aa).

169-176 (GDRQTGKT) is an ATP binding site.

This sequence belongs to the ATPase alpha/beta chains family. F-type ATPases have 2 components, CF(1) - the catalytic core - and CF(0) - the membrane proton channel. CF(1) has five subunits: alpha(3), beta(3), gamma(1), delta(1), epsilon(1). CF(0) has four main subunits: a(1), b(1), b'(1) and c(9-12).

The protein resides in the cell inner membrane. The catalysed reaction is ATP + H2O + 4 H(+)(in) = ADP + phosphate + 5 H(+)(out). Its function is as follows. Produces ATP from ADP in the presence of a proton gradient across the membrane. The alpha chain is a regulatory subunit. The chain is ATP synthase subunit alpha 1 from Cereibacter sphaeroides (strain ATCC 17029 / ATH 2.4.9) (Rhodobacter sphaeroides).